Reading from the N-terminus, the 201-residue chain is UPF0301 protein MAP_0045 (201 aa).

This sequence belongs to the UPF0301 (AlgH) family.

This chain is UPF0301 protein MAP_0045, found in Mycolicibacterium paratuberculosis (strain ATCC BAA-968 / K-10) (Mycobacterium paratuberculosis).